Here is a 203-residue protein sequence, read N- to C-terminus: Secreted RxLR effector protein RXLR-C28 (203 aa).

Positions M1–S24 are cleaved as a signal peptide. The N-linked (GlcNAc...) asparagine glycan is linked to N32. A RxLR motif is present at residues R37–R40. The N-linked (GlcNAc...) asparagine glycan is linked to N193.

The protein belongs to the RxLR effector family.

Its subcellular location is the secreted. It localises to the host cytoplasm. Secreted effector that does not suppress pattern-triggered immunity (PTI) in plant host. In Plasmopara halstedii (Downy mildew of sunflower), this protein is Secreted RxLR effector protein RXLR-C28.